The chain runs to 39 residues: Photosystem II reaction center protein J (39 aa).

The helical transmembrane segment at Leu9–Tyr29 threads the bilayer.

The protein belongs to the PsbJ family. In terms of assembly, PSII is composed of 1 copy each of membrane proteins PsbA, PsbB, PsbC, PsbD, PsbE, PsbF, PsbH, PsbI, PsbJ, PsbK, PsbL, PsbM, PsbT, PsbX, PsbY, PsbZ, Psb30/Ycf12, at least 3 peripheral proteins of the oxygen-evolving complex and a large number of cofactors. It forms dimeric complexes.

It localises to the plastid. The protein resides in the chloroplast thylakoid membrane. Functionally, one of the components of the core complex of photosystem II (PSII). PSII is a light-driven water:plastoquinone oxidoreductase that uses light energy to abstract electrons from H(2)O, generating O(2) and a proton gradient subsequently used for ATP formation. It consists of a core antenna complex that captures photons, and an electron transfer chain that converts photonic excitation into a charge separation. The protein is Photosystem II reaction center protein J of Pyropia yezoensis (Susabi-nori).